We begin with the raw amino-acid sequence, 591 residues long: L-fucose isomerase (591 aa).

Active-site proton acceptor residues include E337 and D361. Mn(2+) is bound by residues E337, D361, and H528.

The protein belongs to the L-fucose isomerase family. In terms of assembly, homohexamer. The cofactor is Mn(2+).

The protein localises to the cytoplasm. The enzyme catalyses L-fucose = L-fuculose. The protein operates within carbohydrate degradation; L-fucose degradation; L-lactaldehyde and glycerone phosphate from L-fucose: step 1/3. Converts the aldose L-fucose into the corresponding ketose L-fuculose. This is L-fucose isomerase from Escherichia coli (strain SMS-3-5 / SECEC).